We begin with the raw amino-acid sequence, 206 residues long: 2,3-bisphosphoglycerate-dependent phosphoglycerate mutase (206 aa).

Residues 9–16 (RHGQSEWN), 22–23 (TG), arginine 61, 88–91 (ERDY), lysine 99, 115–116 (RR), and 159–160 (GN) each bind substrate. Histidine 10 (tele-phosphohistidine intermediate) is an active-site residue. Glutamate 88 acts as the Proton donor/acceptor in catalysis.

The protein belongs to the phosphoglycerate mutase family. BPG-dependent PGAM subfamily. In terms of assembly, homodimer.

The catalysed reaction is (2R)-2-phosphoglycerate = (2R)-3-phosphoglycerate. It participates in carbohydrate degradation; glycolysis; pyruvate from D-glyceraldehyde 3-phosphate: step 3/5. Its function is as follows. Catalyzes the interconversion of 2-phosphoglycerate and 3-phosphoglycerate. In Methylocella silvestris (strain DSM 15510 / CIP 108128 / LMG 27833 / NCIMB 13906 / BL2), this protein is 2,3-bisphosphoglycerate-dependent phosphoglycerate mutase.